The sequence spans 263 residues: Palmitoyltransferase ZDHHC21 (263 aa).

Over 1–4 the chain is Cytoplasmic; the sequence is MKMR. The helical transmembrane segment at 5-25 threads the bilayer; the sequence is LHFVVDPMGWFCMSMVFFVWI. At 26-44 the chain is on the extracellular side; the sequence is YNSFLIPKLVLLPHYAEGH. The chain crosses the membrane as a helical span at residues 45–65; it reads ITAEPVICYYLASLLCFSALF. Residues 66–131 are Cytoplasmic-facing; sequence RASTTDPGKL…WINNCVGEDN (66 aa). In terms of domain architecture, DHHC spans 90–140; that stretch reads ELCNKCNMMRPKRSHHCSRCGHCVRRMDHHCPWINNCVGEDNHWLFLQLCF. Cys120 (S-palmitoyl cysteine intermediate) is an active-site residue. Residues 132 to 152 form a helical membrane-spanning segment; it reads HWLFLQLCFYTQVLSFYTLVL. Over 153 to 181 the chain is Extracellular; the sequence is DFCQYYYFLPLSSVDQADFAVHHELALLR. Residues 182 to 202 form a helical membrane-spanning segment; sequence VSCFMGLIMFGGISSLFYTQV. Residues 203-263 lie on the Cytoplasmic side of the membrane; sequence KGILTDTTTI…KLNLTIRSHV (61 aa).

It belongs to the DHHC palmitoyltransferase family.

It localises to the golgi apparatus membrane. Its subcellular location is the golgi apparatus. The protein resides in the cis-Golgi network membrane. The protein localises to the cell membrane. It carries out the reaction L-cysteinyl-[protein] + hexadecanoyl-CoA = S-hexadecanoyl-L-cysteinyl-[protein] + CoA. Its function is as follows. Palmitoyltransferase that catalyzes the addition of palmitate onto various protein substrates. The sequence is that of Palmitoyltransferase ZDHHC21 from Danio rerio (Zebrafish).